Here is a 357-residue protein sequence, read N- to C-terminus: UPF0283 membrane protein HS_0596 (357 aa).

3 helical membrane passes run 67–87 (LMAT…QWLV), 96–116 (IAFV…GAII), and 213–233 (AVES…MFFI).

It belongs to the UPF0283 family.

The protein resides in the cell inner membrane. This is UPF0283 membrane protein HS_0596 from Histophilus somni (strain 129Pt) (Haemophilus somnus).